The chain runs to 166 residues: Phosphopantetheine adenylyltransferase (166 aa).

Residue Ser11 participates in substrate binding. Residues Ser11 to Phe12 and His19 each bind ATP. Substrate is bound by residues Lys43, Ala76, and Arg90. ATP-binding positions include Gly91–Arg93, Glu101, and Tyr126–Ser132.

This sequence belongs to the bacterial CoaD family. As to quaternary structure, homohexamer. Mg(2+) is required as a cofactor.

Its subcellular location is the cytoplasm. The enzyme catalyses (R)-4'-phosphopantetheine + ATP + H(+) = 3'-dephospho-CoA + diphosphate. It functions in the pathway cofactor biosynthesis; coenzyme A biosynthesis; CoA from (R)-pantothenate: step 4/5. Functionally, reversibly transfers an adenylyl group from ATP to 4'-phosphopantetheine, yielding dephospho-CoA (dPCoA) and pyrophosphate. This is Phosphopantetheine adenylyltransferase from Streptococcus mutans serotype c (strain ATCC 700610 / UA159).